We begin with the raw amino-acid sequence, 24 residues long: GIGALSAKGALKGLAKGLAEHFAN.

N24 is subject to Asparagine amide.

It belongs to the bombinin family. As to expression, expressed by the skin glands.

It is found in the secreted. In terms of biological role, has antimicrobial and hemolytic activities. The protein is Bombinin of Bombina variegata (Yellow-bellied toad).